Here is a 428-residue protein sequence, read N- to C-terminus: Adenylosuccinate synthetase (428 aa).

GTP-binding positions include 12–18 and 40–42; these read GDEGKGK and GHT. The active-site Proton acceptor is the D13. Residues D13 and G40 each coordinate Mg(2+). Residues 13–16, 38–41, T131, R145, Q226, T241, and R305 contribute to the IMP site; these read DEGK and NAGH. Catalysis depends on H41, which acts as the Proton donor. 301 to 307 lines the substrate pocket; it reads ATTGRKR. GTP is bound by residues R307, 333-335, and 415-417; these read KLD and SVG.

The protein belongs to the adenylosuccinate synthetase family. In terms of assembly, homodimer. Mg(2+) serves as cofactor.

The protein localises to the cytoplasm. The catalysed reaction is IMP + L-aspartate + GTP = N(6)-(1,2-dicarboxyethyl)-AMP + GDP + phosphate + 2 H(+). Its pathway is purine metabolism; AMP biosynthesis via de novo pathway; AMP from IMP: step 1/2. Plays an important role in the de novo pathway of purine nucleotide biosynthesis. Catalyzes the first committed step in the biosynthesis of AMP from IMP. The sequence is that of Adenylosuccinate synthetase from Nitratidesulfovibrio vulgaris (strain DSM 19637 / Miyazaki F) (Desulfovibrio vulgaris).